We begin with the raw amino-acid sequence, 391 residues long: Odorant receptor 67d (391 aa).

At 1 to 45 the chain is on the cytoplasmic side; it reads MLKMAKVEPVERYCKVIRMIRFCVGFCGNDVADPNFRMWWLTYAV. The chain crosses the membrane as a helical span at residues 46–66; it reads MAAIAFFFACTGYTIYVGVVI. Topologically, residues 67 to 71 are extracellular; it reads NGDLT. The chain crosses the membrane as a helical span at residues 72-92; that stretch reads IILQALAMVGSAVQGLTKLLV. Residues 93-140 lie on the Cytoplasmic side of the membrane; the sequence is TANNASHMREVQNTYEDIYREYGSKGDEYAKCLEKRIRITWTLLIGFM. The chain crosses the membrane as a helical span at residues 141 to 161; that stretch reads LVYIILLGLVITFPIFYLLIL. Over 162–164 the chain is Extracellular; the sequence is HQK. The helical transmembrane segment at 165-185 threads the bilayer; sequence VLVMQFLIPFLDHTTDGGHLI. Residues 186–191 are Cytoplasmic-facing; the sequence is LTAAHV. Residues 192-212 form a helical membrane-spanning segment; that stretch reads ILITFGGFGNYGGDMYLFLFV. Over 213-268 the chain is Extracellular; that stretch reads THVPLIKDIFCVKLTEFNELVMKRNDFPKVRAMLCDLLVWHQLYTRMLQTTKKIYS. Residues 269 to 289 form a helical membrane-spanning segment; sequence IVLFVQLSTTCVGLLCTISCI. The Cytoplasmic portion of the chain corresponds to 290-297; that stretch reads FMKAWPAA. The chain crosses the membrane as a helical span at residues 298-318; sequence PLYLLYAAITLYTFCGLGTLV. Topologically, residues 319-391 are extracellular; it reads ENSNEDFLSV…FSMMLMNYLG (73 aa).

This sequence belongs to the insect chemoreceptor superfamily. Heteromeric odorant receptor channel (TC 1.A.69) family. Or67d subfamily. In terms of assembly, interacts with Orco. Complexes exist early in the endomembrane system in olfactory sensory neurons (OSNs), coupling these complexes to the conserved ciliary trafficking pathway. Expressed in antenna.

The protein localises to the cell membrane. Plays a role in detection and sensitivity to pheromones and signal transduction of the fatty-acid-derived male pheromone 11-cis vaccenyl acetate (cVA). Acts in concert with Snmp and lush to capture cVA molecules on the surface of Or67d expressing olfactory dendrites and facilitate their transfer to the odorant-receptor Orco complex. Necessary to mediate behavioral responses to cVA by regulating both male and female mating behavior. Activation of Or67d neurons by cVA inhibits courtship of other males, whereas in females their activation promotes receptivity to other males. May form a complex with Orco to form odorant-sensing units, providing sensitive and prolonged odorant signaling and calcium permeability. In Drosophila melanogaster (Fruit fly), this protein is Odorant receptor 67d (Or67d).